A 469-amino-acid polypeptide reads, in one-letter code: Sorting and assembly machinery component 50 homolog (469 aa).

A POTRA domain is found at 45-125 (VVVQHVHFDG…LDVTFEVTEL (81 aa)). Residue K255 is modified to N6-methyllysine.

Belongs to the SAM50/omp85 family. As to quaternary structure, associates with the mitochondrial contact site and cristae organizing system (MICOS) complex, composed of at least MICOS10/MIC10, CHCHD3/MIC19, CHCHD6/MIC25, APOOL/MIC27, IMMT/MIC60, APOO/MIC23/MIC26 and QIL1/MIC13. This complex was also known under the names MINOS or MitOS complex. The MICOS complex associates with mitochondrial outer membrane proteins SAMM50, MTX1 and MTX2 (together described as components of the mitochondrial outer membrane sorting assembly machinery (SAM) complex) and DNAJC11, mitochondrial inner membrane protein TMEM11 and with HSPA9. The MICOS and SAM complexes together with DNAJC11 are part of a large protein complex spanning both membranes termed the mitochondrial intermembrane space bridging (MIB) complex. Interacts with IMMT/MIC60. Interacts with CHCHD3/MIC19. Interacts with ARMC1.

The protein resides in the mitochondrion outer membrane. The protein localises to the cytoplasm. It localises to the mitochondrion. Plays a crucial role in the maintenance of the structure of mitochondrial cristae and the proper assembly of the mitochondrial respiratory chain complexes. Required for the assembly of TOMM40 into the TOM complex. The sequence is that of Sorting and assembly machinery component 50 homolog (SAMM50) from Bos taurus (Bovine).